The sequence spans 146 residues: VHLTDAEKAAISGLWGKVNADGVGAEALGRLLVVYPWTQRFFEHFGDLSSSSAVMGNAKVKSHGKKVITAFADGLKHLDNLKGTFSALSELHCDKLHVDPENFKLLGNMIVIVLSHDLGKDFTPDAQSAFQKVVTGVATALGHKYH.

Residue Val1 is modified to N-acetylvaline. Residues His2–His146 form the Globin domain. At Lys59 the chain carries N6-acetyllysine. His63 is a heme b binding site. Lys82 is subject to N6-acetyllysine. Position 92 (His92) interacts with heme b. An S-nitrosocysteine modification is found at Cys93. Lys144 bears the N6-acetyllysine mark.

This sequence belongs to the globin family. Heterotetramer of two alpha chains and two beta chains. Red blood cells.

In terms of biological role, involved in oxygen transport from the lung to the various peripheral tissues. The polypeptide is Hemoglobin subunit beta (HBB) (Ondatra zibethicus (Muskrat)).